The sequence spans 777 residues: MNNNNNNNNNNNNNNNNNNNNNSNNNDNNYKNNSNNSNNKNNNNNNNNDDNNSSNNNNNNNNNNNNNNNNSNNNNNNNNNNSNNNNNNNDKNDSTNNNLSNISNLNNKFNFNNNDDIIDSECDNNYESYNNNNNNNNNNKNNNNNINDDNRPLVPKILNIHNCIVHSNSNSSNSLIEQSSFPGTPKKRRFIDYLDDENEEDIDYNEENYHSIKNHNHHHHIHNYNHNYNQHSINDDNNRHIHNNNNNNNNNNNNNNNNNINNHNNMNDRIDHNDCTLVNNLTPRDDQNYLKNNSNLEFVNKNNQANNIFNNNNNNNNNNNNNFYNNPFLNQIPSLPFSSLSDNNGDDDDDGIDDGIDDGIDDGIDDIDQEFTYNNYEQYDKEIDSDFDSEISNSFHQNQSPCNNSFKNNNNNNNNNNNNNNNNNNNNNNNNNNNNNNNNSNNGSTSTSSSPCIFSSSFSPSRATISPNRFKKSYKSLNRPLKKFYEETSLSQSSTTTISTSTTISEVFNEKSYSFSSFGSNSFSSLNIKNLNNNNNNNNNNNNNNNNNNNNNNNNNNNNNSNNNNNNNNSNNKNNKGKVCFLNKEIEISLAQEPNDEQNKTKKELEEVKEEEEEEEEEISTIESEKNKDIMMDFYHNTLSKFSEFKIYDQDEPELLEFENNNENNNNNDQDYHYHSFINGRVNRQSNNDLDRFNTQTFNRYNRSINPMALLLEKQGGDDPEDSSDSDSDSDSNSNSDSSDLGNITVRKWKPVEITNSTTTDESNVIKVFKNNKNINQ.

Disordered stretches follow at residues 1–101, 128–150, 219–267, 334–366, 391–466, 529–577, 590–622, and 713–751; these read MNNN…NLSN, SYNNNNNNNNNNKNNNNNINDDN, HHIH…NNMN, SLPFSSLSDNNGDDDDDGIDDGIDDGIDDGIDD, ISNS…ATIS, KNLN…NNKG, LAQEPNDEQNKTKKELEEVKEEEEEEEEEISTI, and EKQGGDDPEDSSDSDSDSDSNSNSDSSDLGNITVRKWKP. Low complexity-rich tracts occupy residues 128 to 147 and 243 to 265; these read SYNNNNNNNNNNKNNNNNIN and NNNNNNNNNNNNNNNNNINNHNN. Polar residues predominate over residues 334-343; sequence SLPFSSLSDN. The span at 344-366 shows a compositional bias: acidic residues; the sequence is NGDDDDDGIDDGIDDGIDDGIDD. Residues 391–407 are compositionally biased toward polar residues; it reads ISNSFHQNQSPCNNSFK. Low complexity-rich tracts occupy residues 408–466 and 532–574; these read NNNN…ATIS and NNNN…NNKN. A compositionally biased stretch (basic and acidic residues) spans 597–606; sequence EQNKTKKELE. Composition is skewed to acidic residues over residues 607-620 and 718-730; these read EVKEEEEEEEEEIS and DDPEDSSDSDSDS. A compositionally biased stretch (low complexity) spans 731–740; that stretch reads DSNSNSDSSD.

This is an uncharacterized protein from Dictyostelium discoideum (Social amoeba).